The chain runs to 149 residues: Putative oligosaccharyltransferase complex subunit CG9662 (149 aa).

Residues 1 to 32 (MIETLYNLPFHILVPPNIKVRRFSIPMPSPMA) are Cytoplasmic-facing. A helical membrane pass occupies residues 33 to 53 (VFSVILFSYFLVTGGIIYDVI). Residues 54–83 (VEPPSLGATVDEHGHSRPVAFMPYRVNGQY) are Extracellular-facing. The chain crosses the membrane as a helical span at residues 84–104 (IMEGLASSFLFTVGGLGFIIM). At 105 to 117 (DQTHTPGKTNLNR) the chain is on the cytoplasmic side. The helical transmembrane segment at 118 to 138 (LLLTAMGFIFILVSFFTTWLF) threads the bilayer. At 139-149 (MRMKLPSYLQP) the chain is on the extracellular side.

The protein belongs to the OSTC family. As to quaternary structure, component of the oligosaccharyltransferase (OST) complex.

The protein localises to the membrane. Subunit of the oligosaccharyl transferase (OST) complex that catalyzes the initial transfer of a defined glycan (Glc(3)Man(9)GlcNAc(2) in eukaryotes) from the lipid carrier dolichol-pyrophosphate to an asparagine residue within an Asn-X-Ser/Thr consensus motif in nascent polypeptide chains, the first step in protein N-glycosylation. N-glycosylation occurs cotranslationally and the complex associates with the Sec61 complex at the channel-forming translocon complex that mediates protein translocation across the endoplasmic reticulum (ER). All subunits are required for a maximal enzyme activity. The sequence is that of Putative oligosaccharyltransferase complex subunit CG9662 from Drosophila melanogaster (Fruit fly).